A 442-amino-acid chain; its full sequence is tRNA-2-methylthio-N(6)-dimethylallyladenosine synthase (442 aa).

One can recognise an MTTase N-terminal domain in the interval 3–118 (KKVFIKTFGC…LPELLNARAA (116 aa)). Positions 12, 49, 81, 155, 159, and 162 each coordinate [4Fe-4S] cluster. A Radical SAM core domain is found at 141–374 (RVEGSSAFVS…QAVINNNIKD (234 aa)). In terms of domain architecture, TRAM spans 377–440 (DERVGTVQRL…TFTLRGEVVV (64 aa)).

It belongs to the methylthiotransferase family. MiaB subfamily. Monomer. [4Fe-4S] cluster serves as cofactor.

The protein resides in the cytoplasm. The catalysed reaction is N(6)-dimethylallyladenosine(37) in tRNA + (sulfur carrier)-SH + AH2 + 2 S-adenosyl-L-methionine = 2-methylsulfanyl-N(6)-dimethylallyladenosine(37) in tRNA + (sulfur carrier)-H + 5'-deoxyadenosine + L-methionine + A + S-adenosyl-L-homocysteine + 2 H(+). In terms of biological role, catalyzes the methylthiolation of N6-(dimethylallyl)adenosine (i(6)A), leading to the formation of 2-methylthio-N6-(dimethylallyl)adenosine (ms(2)i(6)A) at position 37 in tRNAs that read codons beginning with uridine. This is tRNA-2-methylthio-N(6)-dimethylallyladenosine synthase from Delftia acidovorans (strain DSM 14801 / SPH-1).